The chain runs to 388 residues: Flavin-dependent monooxygenase (388 aa).

R54 lines the NADPH pocket. Residues D61, R117, and D311 each coordinate FAD.

The protein belongs to the aromatic-ring hydroxylase family. TetX subfamily. In terms of assembly, monomer. Requires FAD as cofactor.

The protein localises to the cytoplasm. It carries out the reaction a tetracycline + NADPH + O2 + H(+) = an 11a-hydroxytetracycline + NADP(+) + H2O. It catalyses the reaction tetracycline + NADPH + O2 + H(+) = 11a-hydroxytetracycline + NADP(+) + H2O. The catalysed reaction is oxytetracycline + NADPH + O2 + H(+) = 11a-hydroxy-oxytetracycline + NADP(+) + H2O. An FAD-requiring monooxygenase active on some tetracycline antibiotic derivatives, which leads to their inactivation. Hydroxylates carbon 11a of tetracycline and some analogs. Functionally, confers resistance to tetracycline via an oxidoreductase activity; NADPH is more active than NAD. Expression in E.coli leads to breakdown of tetracycline. Confers resistance to doxycycline, chlortetracycline, oxytetracycline and minocycline. The protein is Flavin-dependent monooxygenase of Bacteroides fragilis.